Reading from the N-terminus, the 427-residue chain is Enolase (427 aa).

A (2R)-2-phosphoglycerate-binding site is contributed by Q162. The active-site Proton donor is the E204. Residues D241, E282, and D309 each coordinate Mg(2+). Positions 334, 363, 364, and 385 each coordinate (2R)-2-phosphoglycerate. K334 acts as the Proton acceptor in catalysis.

It belongs to the enolase family. Requires Mg(2+) as cofactor.

The protein localises to the cytoplasm. It is found in the secreted. Its subcellular location is the cell surface. The enzyme catalyses (2R)-2-phosphoglycerate = phosphoenolpyruvate + H2O. The protein operates within carbohydrate degradation; glycolysis; pyruvate from D-glyceraldehyde 3-phosphate: step 4/5. Functionally, catalyzes the reversible conversion of 2-phosphoglycerate (2-PG) into phosphoenolpyruvate (PEP). It is essential for the degradation of carbohydrates via glycolysis. This Frankia casuarinae (strain DSM 45818 / CECT 9043 / HFP020203 / CcI3) protein is Enolase.